The following is an 841-amino-acid chain: Translation initiation factor IF-2 (841 aa).

Residues 87-254 (RKKKVFVQRS…KRNAHGFQSP (168 aa)) are disordered. Positions 96–135 (SPEEIEAERKREMDERRAVENAARQKAEEEAKRRAEEDAR) are enriched in basic and acidic residues. The segment covering 136 to 175 (SQPAASQSAPAAAEPVAAAEPVREAAPAAAPAPASAAPSA) has biased composition (low complexity). Basic and acidic residues-rich tracts occupy residues 176-217 (DARK…EKAP) and 225-234 (TTDEESDSFR). Basic residues predominate over residues 235-248 (RGGRGKGKLKKRNA). Residues 341–510 (SRAPVVTVMG…LLQAEVLELK (170 aa)) form the tr-type G domain. A G1 region spans residues 350 to 357 (GHVDHGKT). 350–357 (GHVDHGKT) provides a ligand contact to GTP. Positions 375–379 (GITQH) are G2. The interval 396 to 399 (DTPG) is G3. Residues 396-400 (DTPGH) and 450-453 (NKID) each bind GTP. The tract at residues 450-453 (NKID) is G4. The tract at residues 486-488 (SAK) is G5.

This sequence belongs to the TRAFAC class translation factor GTPase superfamily. Classic translation factor GTPase family. IF-2 subfamily.

Its subcellular location is the cytoplasm. In terms of biological role, one of the essential components for the initiation of protein synthesis. Protects formylmethionyl-tRNA from spontaneous hydrolysis and promotes its binding to the 30S ribosomal subunits. Also involved in the hydrolysis of GTP during the formation of the 70S ribosomal complex. The polypeptide is Translation initiation factor IF-2 (Pseudomonas syringae pv. syringae (strain B728a)).